A 261-amino-acid chain; its full sequence is Cytochrome c oxidase subunit 3 (261 aa).

Residues 1 to 15 (MAHQSHAYHMVKPSP) lie on the Mitochondrial matrix side of the membrane. Residues 16–34 (WPLTGALSALLTTSGLTMW) traverse the membrane as a helical segment. The Mitochondrial intermembrane segment spans residues 35–40 (FHFHST). A helical transmembrane segment spans residues 41–66 (TLLLTGLLTNALTMYQWWRDVVREST). The Mitochondrial matrix segment spans residues 67–72 (YQGHHT). A helical membrane pass occupies residues 73 to 105 (LPVQKGLRYGMILFITSEVFFFAGFFWAFYHSS). Topologically, residues 106–128 (LAPTPQLGGHWPPTGIIPLNPLE) are mitochondrial intermembrane. A helical membrane pass occupies residues 129–152 (VPLLNTSVLLASGVSITWAHHSLM). The Mitochondrial matrix portion of the chain corresponds to 153 to 155 (ENN). The helical transmembrane segment at 156–183 (RTQMIQALLITILLGIYFTLLQASEYIE) threads the bilayer. Residues 184-190 (APFTISD) are Mitochondrial intermembrane-facing. A helical membrane pass occupies residues 191–223 (GIYGSTFFMATGFHGLHVIIGSTFLTVCLARQL). Topologically, residues 224–232 (LFHFTSKHH) are mitochondrial matrix. Residues 233–256 (FGFEAAAWYWHFVDVVWLFLYVSI) traverse the membrane as a helical segment. Residues 257-261 (YWWGS) lie on the Mitochondrial intermembrane side of the membrane.

This sequence belongs to the cytochrome c oxidase subunit 3 family. Component of the cytochrome c oxidase (complex IV, CIV), a multisubunit enzyme composed of 14 subunits. The complex is composed of a catalytic core of 3 subunits MT-CO1, MT-CO2 and MT-CO3, encoded in the mitochondrial DNA, and 11 supernumerary subunits COX4I, COX5A, COX5B, COX6A, COX6B, COX6C, COX7A, COX7B, COX7C, COX8 and NDUFA4, which are encoded in the nuclear genome. The complex exists as a monomer or a dimer and forms supercomplexes (SCs) in the inner mitochondrial membrane with NADH-ubiquinone oxidoreductase (complex I, CI) and ubiquinol-cytochrome c oxidoreductase (cytochrome b-c1 complex, complex III, CIII), resulting in different assemblies (supercomplex SCI(1)III(2)IV(1) and megacomplex MCI(2)III(2)IV(2)).

The protein resides in the mitochondrion inner membrane. The catalysed reaction is 4 Fe(II)-[cytochrome c] + O2 + 8 H(+)(in) = 4 Fe(III)-[cytochrome c] + 2 H2O + 4 H(+)(out). In terms of biological role, component of the cytochrome c oxidase, the last enzyme in the mitochondrial electron transport chain which drives oxidative phosphorylation. The respiratory chain contains 3 multisubunit complexes succinate dehydrogenase (complex II, CII), ubiquinol-cytochrome c oxidoreductase (cytochrome b-c1 complex, complex III, CIII) and cytochrome c oxidase (complex IV, CIV), that cooperate to transfer electrons derived from NADH and succinate to molecular oxygen, creating an electrochemical gradient over the inner membrane that drives transmembrane transport and the ATP synthase. Cytochrome c oxidase is the component of the respiratory chain that catalyzes the reduction of oxygen to water. Electrons originating from reduced cytochrome c in the intermembrane space (IMS) are transferred via the dinuclear copper A center (CU(A)) of subunit 2 and heme A of subunit 1 to the active site in subunit 1, a binuclear center (BNC) formed by heme A3 and copper B (CU(B)). The BNC reduces molecular oxygen to 2 water molecules using 4 electrons from cytochrome c in the IMS and 4 protons from the mitochondrial matrix. The chain is Cytochrome c oxidase subunit 3 (MT-CO3) from Pongo abelii (Sumatran orangutan).